Reading from the N-terminus, the 89-residue chain is MSLSTEAKAKILAEFGRGANDTGSTEVQVALLTAQINHLQDHFKEHIHDHHSRRGLLRMVSARRKLLAYLKRTEAARYNELIQKLGLRR.

This sequence belongs to the universal ribosomal protein uS15 family. In terms of assembly, part of the 30S ribosomal subunit. Forms a bridge to the 50S subunit in the 70S ribosome, contacting the 23S rRNA.

In terms of biological role, one of the primary rRNA binding proteins, it binds directly to 16S rRNA where it helps nucleate assembly of the platform of the 30S subunit by binding and bridging several RNA helices of the 16S rRNA. Forms an intersubunit bridge (bridge B4) with the 23S rRNA of the 50S subunit in the ribosome. The protein is Small ribosomal subunit protein uS15 of Shewanella sp. (strain ANA-3).